A 668-amino-acid polypeptide reads, in one-letter code: Tastin (668 aa).

3 disordered regions span residues 1–102 (MTTL…GGSN), 154–177 (ERKG…PRIP), and 189–285 (FSRL…GRHH). Ser16 is subject to Phosphoserine. 2 stretches are compositionally biased toward polar residues: residues 27 to 37 (QRCQDFSSVKS) and 55 to 64 (PRSTQRQRPL). A Phosphoserine modification is found at Ser97. A compositionally biased stretch (polar residues) spans 158–168 (GTTQRGQSARS). The residue at position 169 (Ser169) is a Phosphoserine. Basic and acidic residues-rich tracts occupy residues 227-246 (ELRR…DRRT) and 269-282 (GEQE…DGGG). Phosphoserine is present on residues Ser306, Ser324, and Ser338. Disordered stretches follow at residues 364–392 (ITLQ…HQEL) and 462–502 (TEPL…AEPE).

As to quaternary structure, directly binds bystin, and indirectly trophinin.

Its subcellular location is the cytoplasm. Functionally, could be involved with bystin and trophinin in a cell adhesion molecule complex that mediates an initial attachment of the blastocyst to uterine epithelial cells at the time of the embryo implantation. The chain is Tastin from Mus musculus (Mouse).